The sequence spans 132 residues: Small ribosomal subunit protein eS24 (132 aa).

Residues Arg-90–Lys-100 are compositionally biased toward basic and acidic residues. Residues Arg-90–Asp-132 form a disordered region. Basic residues predominate over residues Lys-101–Gly-119.

Belongs to the eukaryotic ribosomal protein eS24 family. In terms of assembly, component of the small ribosomal subunit. Part of the small subunit (SSU) processome, composed of more than 70 proteins and the RNA chaperone small nucleolar RNA (snoRNA) U3.

The protein resides in the cytoplasm. Its subcellular location is the nucleus. The protein localises to the nucleolus. Component of the small ribosomal subunit. The ribosome is a large ribonucleoprotein complex responsible for the synthesis of proteins in the cell. Required for processing of pre-rRNA and maturation of 40S ribosomal subunits. Part of the small subunit (SSU) processome, first precursor of the small eukaryotic ribosomal subunit. During the assembly of the SSU processome in the nucleolus, many ribosome biogenesis factors, an RNA chaperone and ribosomal proteins associate with the nascent pre-rRNA and work in concert to generate RNA folding, modifications, rearrangements and cleavage as well as targeted degradation of pre-ribosomal RNA by the RNA exosome. This is Small ribosomal subunit protein eS24 (rps24) from Xenopus laevis (African clawed frog).